The chain runs to 225 residues: Protein YIP4 (225 aa).

Phosphoserine occurs at positions 27 and 28. Transmembrane regions (helical) follow at residues 91–111, 118–138, 154–176, 180–199, and 205–225; these read WDLW…ALST, SVFT…SLNI, LGYS…LIFI, VIVA…LQNS, and KLLA…IIFL.

This sequence belongs to the YIP1 family. As to quaternary structure, interacts with the YIP1 family members yip1 and yip5, and with several Rab GTPases.

The protein localises to the membrane. Functionally, may be involved in proper membrane localization of Rab GTPases. The polypeptide is Protein YIP4 (Schizosaccharomyces pombe (strain 972 / ATCC 24843) (Fission yeast)).